A 275-amino-acid polypeptide reads, in one-letter code: Integrase homolog (275 aa).

Residues 88–111 (RVSQDRQAQGRERRSVLLPQERRG) show a composition bias toward basic and acidic residues. The tract at residues 88 to 120 (RVSQDRQAQGRERRSVLLPQERRGSSGRQPLYS) is disordered.

This sequence belongs to the 'phage' integrase family.

Functionally, integrase-recombinase proteins are responsible for catalyzing strand exchange between DNA molecules and play an important role in the DNA replication. Its function is as follows. May be required for the formation of concatameric complex replicative intermediates and/or their resolution before encapsidation. This Dryophytes versicolor (chameleon treefrog) protein is Integrase homolog (INT).